Consider the following 801-residue polypeptide: Phenylalanine--tRNA ligase beta subunit (801 aa).

The 115-residue stretch at 39-153 (AEGLSKLVVG…EGAIPGDSIF (115 aa)) folds into the tRNA-binding domain. Residues 406-481 (TEPVEVSTTL…RIYGYEKLPT (76 aa)) form the B5 domain. Mg(2+) contacts are provided by Asp459, Asp465, Glu468, and Glu469. The FDX-ACB domain maps to 708 to 801 (TKYPSVSRDI…LVEKVNAEIR (94 aa)).

Belongs to the phenylalanyl-tRNA synthetase beta subunit family. Type 1 subfamily. In terms of assembly, tetramer of two alpha and two beta subunits. It depends on Mg(2+) as a cofactor.

Its subcellular location is the cytoplasm. The enzyme catalyses tRNA(Phe) + L-phenylalanine + ATP = L-phenylalanyl-tRNA(Phe) + AMP + diphosphate + H(+). The chain is Phenylalanine--tRNA ligase beta subunit from Streptococcus agalactiae serotype Ia (strain ATCC 27591 / A909 / CDC SS700).